Reading from the N-terminus, the 1107-residue chain is MKRFVYINDDEASKELCCDNRISNRKYTLWNFLPKNLWEQFSRFMNQYFLLIACLQLWSLITPVNPASTWGPLIFIFAVSASKEAWDDYHRYLSDKKANEKEVWIVKQGIKKHIQAQDIQVGNIVWLRENDEVPCDLVLLGTSDPQGVCYVETAALDGETDLKTRVIPSACVGIDLELLHKMKGVIECPVPDKDIRRFDANMRLFPPFIDNDVCSLTIKNTLLQSCYLRNTEWACGVSVYTGNQTKLGMSRGIAEPKLTAMDAMIDKLTGAIFVFQIVVVLVLGIAGNVWKDTEARKQWYVQYPEEAPWYELLVIPLRFELLCSIMIPISIKVSLDLVKGLYAKFIEWDVEMIDQETGTASYAANTAISEDLGQVEYILTDKTGTLTDNKMIFRRCCIGGIFYGNENGDALKDAQLLNAITSGSTDVIRFLTVMAICNTVLPVQSKAGDIVYKAQSQDEDALVIAASKLHMVFVGKNANLLEIRFNGSVIRYEVLEILEFTSDRKRMSVVVKDCQNGKIILLSKGADEAILPYARAGQQTRTIGDAVEHYSQLGLRTLCLAWRELEENEYLEWSVKFKEASSLLVDREWRIAEVCQRLEHDLYILGVTAIEDRLQDGVPETIETLRKAGINFWMLTGDKQNTAIQIALSCNFISPEPKGQLLMIDGKTEEDVSRSLERVLLTMRITASEPKDVAFVIDGWALEIALKHHRKDFVELAILSRTAICCRVTPSQKAQLVEILKSCDYRTLAIGDGGNDVRMIQQADIGVGISGREGLQAARAADYSIGRFRFLKRLILVHGRYSYNRTAFLSQYSFYKSLLICFIQIFFSFISGVSGTSLFNSVSLMAYNVFYTSVPVLVSVIDKDLSEASVMQHPQILFYCQAGRLLNPSTFAGWFGRSLFHAIIVFVITIHAYAYEKSEMEELGMVALSGCIWLQAFVVAQETNSFTVLQHLSIWGNLVGFYAINFLFSAIPSSGMYTIMFRLCSQPSYWITMFLIVGAGMGPIFALKYFRYTYRPSKINILQQAERMGGPILTLGNIETQPRTIEKDLSPISITQPKNRSPVYEPLLSDSPNATRRSFGPGTPFEFFQSQSRLSSSSGYTRNCKDN.

Over 1 to 33 (MKRFVYINDDEASKELCCDNRISNRKYTLWNFL) the chain is Cytoplasmic. A helical transmembrane segment spans residues 34–55 (PKNLWEQFSRFMNQYFLLIACL). Over 56–60 (QLWSL) the chain is Extracellular. The helical transmembrane segment at 61–83 (ITPVNPASTWGPLIFIFAVSASK) threads the bilayer. The Cytoplasmic portion of the chain corresponds to 84–268 (EAWDDYHRYL…TAMDAMIDKL (185 aa)). Residues 269-290 (TGAIFVFQIVVVLVLGIAGNVW) form a helical membrane-spanning segment. Topologically, residues 291–315 (KDTEARKQWYVQYPEEAPWYELLVI) are extracellular. A helical transmembrane segment spans residues 316 to 333 (PLRFELLCSIMIPISIKV). The Cytoplasmic portion of the chain corresponds to 334-807 (SLDLVKGLYA…HGRYSYNRTA (474 aa)). D381 acts as the 4-aspartylphosphate intermediate in catalysis. Positions 752 and 756 each coordinate Mg(2+). A helical membrane pass occupies residues 808–827 (FLSQYSFYKSLLICFIQIFF). The Extracellular segment spans residues 828-841 (SFISGVSGTSLFNS). Residues 842-860 (VSLMAYNVFYTSVPVLVSV) traverse the membrane as a helical segment. Residues 861-890 (IDKDLSEASVMQHPQILFYCQAGRLLNPST) are Cytoplasmic-facing. The helical transmembrane segment at 891-912 (FAGWFGRSLFHAIIVFVITIHA) threads the bilayer. At 913 to 919 (YAYEKSE) the chain is on the extracellular side. Residues 920–942 (MEELGMVALSGCIWLQAFVVAQE) form a helical membrane-spanning segment. Over 943–948 (TNSFTV) the chain is Cytoplasmic. Residues 949–969 (LQHLSIWGNLVGFYAINFLFS) form a helical membrane-spanning segment. Residues 970–982 (AIPSSGMYTIMFR) are Extracellular-facing. A helical membrane pass occupies residues 983 to 1007 (LCSQPSYWITMFLIVGAGMGPIFAL). Residues 1008-1107 (KYFRYTYRPS…SGYTRNCKDN (100 aa)) are Cytoplasmic-facing. The segment at 1048-1075 (DLSPISITQPKNRSPVYEPLLSDSPNAT) is disordered. S1050 bears the Phosphoserine mark.

This sequence belongs to the cation transport ATPase (P-type) (TC 3.A.3) family. Type IV subfamily. Interacts with ALIS1, ALIS3 and ALIS5 in a heterologous system.

The protein resides in the endoplasmic reticulum membrane. It is found in the prevacuolar compartment membrane. It carries out the reaction ATP + H2O + phospholipidSide 1 = ADP + phosphate + phospholipidSide 2.. Functionally, involved in transport of phospholipids. Contributes to transmembrane flipping of lipids. Requires an interaction with a protein of the ALIS family for activity. Specific for phosphatidylserine and has no activity with lysolipid, phosphatidylcholine or phosphatidylethanolamine. The polypeptide is Phospholipid-transporting ATPase 2 (Arabidopsis thaliana (Mouse-ear cress)).